The following is a 165-amino-acid chain: MKTPRRRAREFAVQGIYQWQLNALTPATIEKNLRDNEQFAKADEALFRTLLYGVLNDPVRIESAIASHFERAPEDVSPVERAVLLMAAFELTQQAETPLAVIINEAIEIAKTFGGAEGHRFVNGVLDKYAAEVRPEEFEAVRSHRRNKRPAADKPVATDKPAAAE.

Residues 139–165 form a disordered region; that stretch reads EAVRSHRRNKRPAADKPVATDKPAAAE.

The protein belongs to the NusB family.

Functionally, involved in transcription antitermination. Required for transcription of ribosomal RNA (rRNA) genes. Binds specifically to the boxA antiterminator sequence of the ribosomal RNA (rrn) operons. This chain is Transcription antitermination protein NusB, found in Laribacter hongkongensis (strain HLHK9).